A 496-amino-acid polypeptide reads, in one-letter code: Glutelin type-A 3 (496 aa).

Positions Met1 to Ala24 are cleaved as a signal peptide. Intrachain disulfides connect Cys45/Cys78 and Cys121/Cys312. Cupin type-1 domains lie at Leu50–Arg248 and Gln318–Arg467.

This sequence belongs to the 11S seed storage protein (globulins) family. In terms of assembly, hexamer; each subunit is composed of an acidic and a basic chain derived from a single precursor and linked by a disulfide bond.

Functionally, seed storage protein. In Oryza sativa subsp. japonica (Rice), this protein is Glutelin type-A 3 (GLUA3).